The primary structure comprises 124 residues: Ribonuclease P protein component (124 aa).

This sequence belongs to the RnpA family. As to quaternary structure, consists of a catalytic RNA component (M1 or rnpB) and a protein subunit.

The enzyme catalyses Endonucleolytic cleavage of RNA, removing 5'-extranucleotides from tRNA precursor.. Its function is as follows. RNaseP catalyzes the removal of the 5'-leader sequence from pre-tRNA to produce the mature 5'-terminus. It can also cleave other RNA substrates such as 4.5S RNA. The protein component plays an auxiliary but essential role in vivo by binding to the 5'-leader sequence and broadening the substrate specificity of the ribozyme. The protein is Ribonuclease P protein component of Maridesulfovibrio salexigens (strain ATCC 14822 / DSM 2638 / NCIMB 8403 / VKM B-1763) (Desulfovibrio salexigens).